The chain runs to 423 residues: UDP-N-acetylglucosamine 1-carboxyvinyltransferase 2 (423 aa).

Lys23–Asn24 provides a ligand contact to phosphoenolpyruvate. Residue Arg95 participates in UDP-N-acetyl-alpha-D-glucosamine binding. Catalysis depends on Cys119, which acts as the Proton donor. Cys119 carries the post-translational modification 2-(S-cysteinyl)pyruvic acid O-phosphothioketal. 2 residues coordinate UDP-N-acetyl-alpha-D-glucosamine: Asp306 and Ile328.

The protein belongs to the EPSP synthase family. MurA subfamily.

It localises to the cytoplasm. It carries out the reaction phosphoenolpyruvate + UDP-N-acetyl-alpha-D-glucosamine = UDP-N-acetyl-3-O-(1-carboxyvinyl)-alpha-D-glucosamine + phosphate. It participates in cell wall biogenesis; peptidoglycan biosynthesis. In terms of biological role, cell wall formation. Adds enolpyruvyl to UDP-N-acetylglucosamine. The polypeptide is UDP-N-acetylglucosamine 1-carboxyvinyltransferase 2 (Symbiobacterium thermophilum (strain DSM 24528 / JCM 14929 / IAM 14863 / T)).